The primary structure comprises 103 residues: Large ribosomal subunit protein bL21 (103 aa).

Belongs to the bacterial ribosomal protein bL21 family. As to quaternary structure, part of the 50S ribosomal subunit. Contacts protein L20.

Its function is as follows. This protein binds to 23S rRNA in the presence of protein L20. This Pasteurella multocida (strain Pm70) protein is Large ribosomal subunit protein bL21.